The chain runs to 143 residues: Transcriptional regulator MraZ (143 aa).

2 consecutive SpoVT-AbrB domains span residues 5–47 and 76–119; these read EFRH…PMKE and ATEC…DEAR.

The protein belongs to the MraZ family. In terms of assembly, forms oligomers.

The protein resides in the cytoplasm. The protein localises to the nucleoid. The chain is Transcriptional regulator MraZ from Enterococcus hirae.